The following is a 297-amino-acid chain: uncharacterized protein (297 aa).

This is an uncharacterized protein from Bacillus subtilis (strain 168).